The primary structure comprises 346 residues: Melanoma-associated antigen B3 (346 aa).

Positions 1-35 are disordered; that stretch reads MPRGQKSTLHAREKRQQTRGQTQDHQGAQITATNK. The span at 18 to 33 shows a compositional bias: polar residues; sequence TRGQTQDHQGAQITAT. The 200-residue stretch at 111–310 folds into the MAGE domain; that stretch reads LIMKTNMLVQ…SAFQFWYEEA (200 aa).

As to expression, expressed in testis.

This chain is Melanoma-associated antigen B3 (MAGEB3), found in Homo sapiens (Human).